The following is a 244-amino-acid chain: 5-oxoprolinase subunit A (244 aa).

It belongs to the LamB/PxpA family. As to quaternary structure, forms a complex composed of PxpA, PxpB and PxpC.

It catalyses the reaction 5-oxo-L-proline + ATP + 2 H2O = L-glutamate + ADP + phosphate + H(+). Its function is as follows. Catalyzes the cleavage of 5-oxoproline to form L-glutamate coupled to the hydrolysis of ATP to ADP and inorganic phosphate. This chain is 5-oxoprolinase subunit A, found in Salmonella typhimurium (strain LT2 / SGSC1412 / ATCC 700720).